Consider the following 448-residue polypeptide: Protein king tubby (448 aa).

A disordered region spans residues 103–195; sequence HELEDEESSP…NGTGGESEGD (93 aa). Over residues 118–133 the composition is skewed to low complexity; the sequence is QHQQSASHSANSTQSQ. Ser-141 carries the phosphoserine modification. Gly residues predominate over residues 182–191; the sequence is NGTGNGTGGE.

Belongs to the TUB family.

It localises to the cytoplasm. The protein resides in the nucleus. It is found in the cell projection. The protein localises to the cilium membrane. Its subcellular location is the rhabdomere. This chain is Protein king tubby, found in Drosophila erecta (Fruit fly).